We begin with the raw amino-acid sequence, 212 residues long: Probable GTP-binding protein EngB (212 aa).

The 173-residue stretch at 38 to 210 (SLPEIAFVGK…KASLAKCIKP (173 aa)) folds into the EngB-type G domain. Residues 46–53 (GKSNVGKS), 73–77 (GRTRQ), 91–94 (DLPG), 158–161 (TKSD), and 189–191 (VSS) each bind GTP. Mg(2+) is bound by residues serine 53 and threonine 75.

The protein belongs to the TRAFAC class TrmE-Era-EngA-EngB-Septin-like GTPase superfamily. EngB GTPase family. Requires Mg(2+) as cofactor.

In terms of biological role, necessary for normal cell division and for the maintenance of normal septation. In Rickettsia felis (strain ATCC VR-1525 / URRWXCal2) (Rickettsia azadi), this protein is Probable GTP-binding protein EngB.